We begin with the raw amino-acid sequence, 369 residues long: uncharacterized protein (369 aa).

Residues 1–35 form a disordered region; that stretch reads MQTNNPSYFFRSESALQDEKRKEEKSHNPNGNPRN. Over residues 17 to 27 the composition is skewed to basic and acidic residues; that stretch reads QDEKRKEEKSH. WD repeat units lie at residues 83-127, 130-169, 174-213, 220-260, 263-301, and 304-341; these read GHSG…CVET, GHTDYVKCLLLLEEEGLLLSGSTDASLIVWDVSSQPSRLL, GHSRGIECITRQPNTDIFWTCGSESSIRCWHITKVGGSQL, GHQS…HEET, EHPDVCTDVLTLADGNIATACRDEEIRVWDTTTGNVKDI, and GHYESVTKILQWKSYLISSSLDQTIRVWDLEYSADNNE.

This is an uncharacterized protein from Schizosaccharomyces pombe (strain 972 / ATCC 24843) (Fission yeast).